The primary structure comprises 301 residues: Oxygen-dependent coproporphyrinogen-III oxidase (301 aa).

Serine 90 contributes to the substrate binding site. A divalent metal cation is bound by residues histidine 94 and histidine 104. Catalysis depends on histidine 104, which acts as the Proton donor. 106-108 contacts substrate; it reads NVR. The a divalent metal cation site is built by histidine 143 and histidine 173. The segment at 238 to 273 is important for dimerization; it reads YVEFNLVWDRGTLFGLQSGGRTESILMSLPPVVKWR. Position 256–258 (256–258) interacts with substrate; the sequence is GGR.

This sequence belongs to the aerobic coproporphyrinogen-III oxidase family. Homodimer. A divalent metal cation is required as a cofactor.

It localises to the cytoplasm. It catalyses the reaction coproporphyrinogen III + O2 + 2 H(+) = protoporphyrinogen IX + 2 CO2 + 2 H2O. It functions in the pathway porphyrin-containing compound metabolism; protoporphyrin-IX biosynthesis; protoporphyrinogen-IX from coproporphyrinogen-III (O2 route): step 1/1. Involved in the heme biosynthesis. Catalyzes the aerobic oxidative decarboxylation of propionate groups of rings A and B of coproporphyrinogen-III to yield the vinyl groups in protoporphyrinogen-IX. The chain is Oxygen-dependent coproporphyrinogen-III oxidase from Nitrosomonas europaea (strain ATCC 19718 / CIP 103999 / KCTC 2705 / NBRC 14298).